Here is a 305-residue protein sequence, read N- to C-terminus: Transcription factor bHLH18 (305 aa).

Residues 41-67 (LKTTHISPNLHPFSSSNPPPPKHQPSS) are disordered. Residues 44–56 (THISPNLHPFSSS) are compositionally biased toward polar residues. Residues 122–171 (SNAQDHILAERKRREKLTQRFVALSALIPGLKKMDKASVLGDAIKHIKYL) enclose the bHLH domain. The segment at 201–224 (DENHQPSSSSSSDGNRNSSSSNLP) is disordered. Residues 207 to 222 (SSSSSSDGNRNSSSSN) are compositionally biased toward low complexity.

Homodimer. In terms of tissue distribution, expressed in roots.

It is found in the nucleus. The polypeptide is Transcription factor bHLH18 (BHLH18) (Arabidopsis thaliana (Mouse-ear cress)).